Here is a 113-residue protein sequence, read N- to C-terminus: Regulator of rDNA transcription protein 7 (113 aa).

The next 2 helical transmembrane spans lie at F13–N35 and F70–L92.

The protein resides in the membrane. Identified in a screen for mutants with decreased levels of rDNA transcription. The protein is Regulator of rDNA transcription protein 7 (RRT7) of Saccharomyces cerevisiae (strain ATCC 204508 / S288c) (Baker's yeast).